Reading from the N-terminus, the 415-residue chain is Gamma-glutamyl phosphate reductase (415 aa).

It belongs to the gamma-glutamyl phosphate reductase family.

Its subcellular location is the cytoplasm. It carries out the reaction L-glutamate 5-semialdehyde + phosphate + NADP(+) = L-glutamyl 5-phosphate + NADPH + H(+). It functions in the pathway amino-acid biosynthesis; L-proline biosynthesis; L-glutamate 5-semialdehyde from L-glutamate: step 2/2. Functionally, catalyzes the NADPH-dependent reduction of L-glutamate 5-phosphate into L-glutamate 5-semialdehyde and phosphate. The product spontaneously undergoes cyclization to form 1-pyrroline-5-carboxylate. This is Gamma-glutamyl phosphate reductase from Bacillus velezensis (strain DSM 23117 / BGSC 10A6 / LMG 26770 / FZB42) (Bacillus amyloliquefaciens subsp. plantarum).